Reading from the N-terminus, the 198-residue chain is MAKILVLYYSMYGHIETMAHAVAEGAKKVDGAEVIIKRVPETMPPEIFAKAGGKTQNAPVATPQELADYDAIIFGTPTRFGNMPGQMRTFLDQTGGLWASGALYGKLGSVFSSTGTGGGQEQTITSTWTTLAHHGMVIVPIGYAAQELFDVSQVRGGTPYGATTIAGGDGSRQPSQEELSIARYQGEYVAGLAVKLNG.

One can recognise a Flavodoxin-like domain in the interval 4-189 (ILVLYYSMYG…SIARYQGEYV (186 aa)). FMN contacts are provided by residues 10 to 15 (SMYGHI) and 78 to 80 (TRF). Y12 is an NAD(+) binding site. Position 98 (W98) interacts with substrate. FMN is bound by residues 113 to 118 (STGTGG) and H133.

The protein belongs to the WrbA family. FMN is required as a cofactor.

The enzyme catalyses a quinone + NADH + H(+) = a quinol + NAD(+). It carries out the reaction a quinone + NADPH + H(+) = a quinol + NADP(+). This is NAD(P)H dehydrogenase (quinone) from Salmonella paratyphi A (strain ATCC 9150 / SARB42).